Consider the following 434-residue polypeptide: Alpha-enolase (434 aa).

Residue Ser2 is modified to N-acetylserine. Lys5 carries the post-translational modification N6-acetyllysine. Ser27 carries the phosphoserine modification. Ser40 contacts Mg(2+). Tyr44 bears the Phosphotyrosine mark. An N6-acetyllysine; alternate modification is found at Lys60. The residue at position 60 (Lys60) is an N6-succinyllysine; alternate. N6-acetyllysine is present on residues Lys64 and Lys71. Lys89 is modified (N6-acetyllysine; alternate). Lys89 is modified (N6-succinyllysine; alternate). N6-acetyllysine occurs at positions 92 and 126. 2 residues coordinate substrate: His158 and Glu167. Residues Lys193 and Lys199 each carry the N6-acetyllysine modification. Residue Lys202 is modified to N6-acetyllysine; alternate. Lys202 participates in a covalent cross-link: Glycyl lysine isopeptide (Lys-Gly) (interchain with G-Cter in SUMO2); alternate. Catalysis depends on Glu210, which acts as the Proton donor. Residues Lys228 and Lys233 each carry the N6-acetyllysine; alternate modification. Lys228 carries the N6-succinyllysine; alternate modification. Lys228 bears the N6-(2-hydroxyisobutyryl)lysine; alternate mark. Position 233 is an N6-malonyllysine; alternate (Lys233). Asp245 lines the Mg(2+) pocket. Ser254 is modified (phosphoserine). The residue at position 256 (Lys256) is an N6-acetyllysine. Phosphoserine is present on residues Ser263 and Ser272. N6-acetyllysine; alternate is present on Lys281. Position 281 is an N6-(2-hydroxyisobutyryl)lysine; alternate (Lys281). Lys285 carries the N6-acetyllysine modification. Phosphotyrosine is present on Tyr287. A Phosphoserine modification is found at Ser291. Residues Glu293 and Asp318 each coordinate Mg(2+). Glu293 and Asp318 together coordinate substrate. 2 positions are modified to N6-acetyllysine: Lys335 and Lys343. Lys343 (proton acceptor) is an active-site residue. Substrate-binding positions include 370–373 (SHRS) and Lys394. A required for interaction with PLG region spans residues 405–434 (AKYNQLLRIEEELGSKAKFAGRNFRNPLAK). Lys406 bears the N6-acetyllysine mark. Lys420 is modified (N6-acetyllysine; alternate). Lys420 carries the post-translational modification N6-succinyllysine; alternate. Lys420 is subject to N6-malonyllysine; alternate.

The protein belongs to the enolase family. In terms of assembly, mammalian enolase is composed of 3 isozyme subunits, alpha, beta and gamma, which can form homodimers or heterodimers which are cell-type and development-specific. ENO1 interacts with PLG in the neuronal plasma membrane and promotes its activation. The C-terminal lysine is required for this binding. Interacts with ENO4 and PGAM2. Interacts with CMTM6. Mg(2+) is required as a cofactor. In terms of processing, ISGylated. Post-translationally, lysine 2-hydroxyisobutyrylation (Khib) by p300/EP300 activates the phosphopyruvate hydratase activity.

It is found in the cytoplasm. Its subcellular location is the cell membrane. It carries out the reaction (2R)-2-phosphoglycerate = phosphoenolpyruvate + H2O. Its pathway is carbohydrate degradation; glycolysis; pyruvate from D-glyceraldehyde 3-phosphate: step 4/5. In terms of biological role, glycolytic enzyme the catalyzes the conversion of 2-phosphoglycerate to phosphoenolpyruvate. In addition to glycolysis, involved in various processes such as growth control, hypoxia tolerance and allergic responses. May also function in the intravascular and pericellular fibrinolytic system due to its ability to serve as a receptor and activator of plasminogen on the cell surface of several cell-types such as leukocytes and neurons. Stimulates immunoglobulin production. The sequence is that of Alpha-enolase (ENO1) from Pongo abelii (Sumatran orangutan).